Here is a 360-residue protein sequence, read N- to C-terminus: WD repeat domain phosphoinositide-interacting protein 4 (360 aa).

WD repeat units follow at residues 1–34 (MTQQPLRGVTSLRFNQDQSCFCCAMETGVRIYNV), 40–84 (KGHL…IWDD), 92–128 (KEKLVLEFTFTKPVLSVRMRHDKIVIVLKNRIYVYSF), 133–174 (RKLF…LVDL), 183–222 (SAPFTINAHQSDIACVSLNQPGTVVASASQKGTLIRLFDT), 227–266 (KLVELRRGTDPATLYCINFSHDSSFLCASSDKGTVHIFAL), and 284–329 (GPMI…ICVD). Positions 231-234 (LRRG) match the L/FRRG motif motif.

Belongs to the WD repeat PROPPIN family. In terms of assembly, interacts with WIPI1. Interacts with WIPI2. Interacts with ATG2A and ATG2B. Interacts with ULK1. May interact with the PRKAA1, PRKAA2, PRKAB1 and PRKAG1 subunits of the AMPK kinase. May interact with NUDC. In terms of tissue distribution, ubiquitously expressed, with high expression in skeletal muscle and heart. Weakly expressed in liver and placenta. Expression is down-regulated in pancreatic and in kidney tumors.

It is found in the preautophagosomal structure. The protein resides in the cytoplasm. Activated upon amino-acid starvation. Functionally, component of the autophagy machinery that controls the major intracellular degradation process by which cytoplasmic materials are packaged into autophagosomes and delivered to lysosomes for degradation. Binds phosphatidylinositol 3-phosphate (PtdIns3P). Activated by the STK11/AMPK signaling pathway upon starvation, WDR45 is involved in autophagosome assembly downstream of WIPI2, regulating the size of forming autophagosomes. Together with WIPI1, promotes ATG2 (ATG2A or ATG2B)-mediated lipid transfer by enhancing ATG2-association with phosphatidylinositol 3-monophosphate (PI3P)-containing membranes. Probably recruited to membranes through its PtdIns3P activity. This Homo sapiens (Human) protein is WD repeat domain phosphoinositide-interacting protein 4 (WDR45).